Reading from the N-terminus, the 420-residue chain is Tol-Pal system protein TolB (420 aa).

The N-terminal stretch at 1-21 (MKLFVHLVLFISLFIPYFTKA) is a signal peptide.

The protein belongs to the TolB family. The Tol-Pal system is composed of five core proteins: the inner membrane proteins TolA, TolQ and TolR, the periplasmic protein TolB and the outer membrane protein Pal. They form a network linking the inner and outer membranes and the peptidoglycan layer.

The protein resides in the periplasm. Functionally, part of the Tol-Pal system, which plays a role in outer membrane invagination during cell division and is important for maintaining outer membrane integrity. The sequence is that of Tol-Pal system protein TolB from Wolbachia sp. subsp. Drosophila simulans (strain wRi).